We begin with the raw amino-acid sequence, 86 residues long: MSKGHSLQDPYLNVLRKERIPVSIYLVNGIKLQGQVESFDQFVVLLKNTVSQMVYKHAISTVVPSRPVRVPLLNADGTSAEDENGG.

The Sm domain occupies 9–68 (DPYLNVLRKERIPVSIYLVNGIKLQGQVESFDQFVVLLKNTVSQMVYKHAISTVVPSRPV).

This sequence belongs to the Hfq family. Homohexamer.

RNA chaperone that binds small regulatory RNA (sRNAs) and mRNAs to facilitate mRNA translational regulation in response to envelope stress, environmental stress and changes in metabolite concentrations. Also binds with high specificity to tRNAs. The chain is RNA-binding protein Hfq from Saccharophagus degradans (strain 2-40 / ATCC 43961 / DSM 17024).